Reading from the N-terminus, the 224-residue chain is Urease accessory protein UreF (224 aa).

This sequence belongs to the UreF family. As to quaternary structure, ureD, UreF and UreG form a complex that acts as a GTP-hydrolysis-dependent molecular chaperone, activating the urease apoprotein by helping to assemble the nickel containing metallocenter of UreC. The UreE protein probably delivers the nickel.

It localises to the cytoplasm. Functionally, required for maturation of urease via the functional incorporation of the urease nickel metallocenter. This Pseudomonas putida (strain W619) protein is Urease accessory protein UreF.